A 262-amino-acid chain; its full sequence is uncharacterized protein (262 aa).

One can recognise an S4 RNA-binding domain in the interval 6 to 70 (LRINQFLAHY…LKNKKFSVLV (65 aa)). The active-site Nucleophile is the D108.

It belongs to the pseudouridine synthase RsuA family.

It carries out the reaction a uridine in RNA = a pseudouridine in RNA. This is an uncharacterized protein from Helicobacter pylori (strain J99 / ATCC 700824) (Campylobacter pylori J99).